Consider the following 178-residue polypeptide: Protein GrpE (178 aa).

Composition is skewed to basic and acidic residues over residues Met-1 to Ala-19 and Ser-30 to Arg-42. The interval Met-1–Arg-42 is disordered.

The protein belongs to the GrpE family. Homodimer.

The protein localises to the cytoplasm. Participates actively in the response to hyperosmotic and heat shock by preventing the aggregation of stress-denatured proteins, in association with DnaK and GrpE. It is the nucleotide exchange factor for DnaK and may function as a thermosensor. Unfolded proteins bind initially to DnaJ; upon interaction with the DnaJ-bound protein, DnaK hydrolyzes its bound ATP, resulting in the formation of a stable complex. GrpE releases ADP from DnaK; ATP binding to DnaK triggers the release of the substrate protein, thus completing the reaction cycle. Several rounds of ATP-dependent interactions between DnaJ, DnaK and GrpE are required for fully efficient folding. This is Protein GrpE from Streptococcus sanguinis (strain SK36).